A 510-amino-acid chain; its full sequence is Inositol-3-phosphate synthase (510 aa).

Glycine 70, glycine 71, asparagine 72, asparagine 73, aspartate 143, isoleucine 180, glutamine 190, arginine 193, threonine 230, alanine 231, asparagine 232, threonine 233, glycine 281, serine 282, aspartate 306, serine 309, asparagine 340, asparagine 341, aspartate 342, lysine 355, glycine 393, aspartate 394, aspartate 422, and serine 423 together coordinate NAD(+).

Belongs to the myo-inositol 1-phosphate synthase family. It depends on NAD(+) as a cofactor.

It localises to the cytoplasm. Its subcellular location is the cytosol. It is found in the nucleus. The catalysed reaction is D-glucose 6-phosphate = 1D-myo-inositol 3-phosphate. Its pathway is polyol metabolism; myo-inositol biosynthesis; myo-inositol from D-glucose 6-phosphate: step 1/2. Functionally, key enzyme in myo-inositol biosynthesis pathway that catalyzes the conversion of glucose 6-phosphate to 1-myo-inositol 1-phosphate in a NAD-dependent manner. The sequence is that of Inositol-3-phosphate synthase from Hordeum vulgare (Barley).